We begin with the raw amino-acid sequence, 770 residues long: Probable methyltransferase PMT24 (770 aa).

Residues 1–17 are Cytoplasmic-facing; that stretch reads MAMGKYSRVDGKKSSGY. Residues 18 to 38 form a helical; Signal-anchor for type II membrane protein membrane-spanning segment; it reads GLTITIVLIVSLCLVGAWMFM. The Lumenal portion of the chain corresponds to 39 to 770; that stretch reads SSWSAPTESI…EAETIQSAIA (732 aa). Composition is skewed to basic and acidic residues over residues 54-81 and 93-164; these read ERTKDVDTTKSDFKSEEVDRGSKSFPDE and NEEK…KSED. The interval 54 to 223 is disordered; sequence ERTKDVDTTK…STGSGAWSTQ (170 aa). N-linked (GlcNAc...) asparagine glycans are attached at residues Asn-160 and Asn-166. Residues 212–223 show a composition bias toward polar residues; it reads ESSTGSGAWSTQ. N-linked (GlcNAc...) asparagine glycosylation is found at Asn-244 and Asn-363.

The protein belongs to the methyltransferase superfamily.

Its subcellular location is the golgi apparatus membrane. The sequence is that of Probable methyltransferase PMT24 from Arabidopsis thaliana (Mouse-ear cress).